Here is a 163-residue protein sequence, read N- to C-terminus: Cyclic pyranopterin monophosphate synthase (163 aa).

Substrate is bound by residues 78–80 (LCH) and 116–117 (ME). The active site involves aspartate 131.

It belongs to the MoaC family. As to quaternary structure, homohexamer; trimer of dimers.

It catalyses the reaction (8S)-3',8-cyclo-7,8-dihydroguanosine 5'-triphosphate = cyclic pyranopterin phosphate + diphosphate. Its pathway is cofactor biosynthesis; molybdopterin biosynthesis. In terms of biological role, catalyzes the conversion of (8S)-3',8-cyclo-7,8-dihydroguanosine 5'-triphosphate to cyclic pyranopterin monophosphate (cPMP). The sequence is that of Cyclic pyranopterin monophosphate synthase from Agrobacterium fabrum (strain C58 / ATCC 33970) (Agrobacterium tumefaciens (strain C58)).